The sequence spans 573 residues: Methionine--tRNA ligase (573 aa).

Residues Pro11–Asn21 carry the 'HIGH' region motif. Positions 143, 146, 156, and 159 each coordinate Zn(2+). The 'KMSKS' region motif lies at Gln346 to Ser350. ATP is bound at residue Thr349.

It belongs to the class-I aminoacyl-tRNA synthetase family. MetG type 1 subfamily. As to quaternary structure, monomer. The cofactor is Zn(2+).

It is found in the cytoplasm. It carries out the reaction tRNA(Met) + L-methionine + ATP = L-methionyl-tRNA(Met) + AMP + diphosphate. Its function is as follows. Is required not only for elongation of protein synthesis but also for the initiation of all mRNA translation through initiator tRNA(fMet) aminoacylation. This is Methionine--tRNA ligase from Ruegeria sp. (strain TM1040) (Silicibacter sp.).